Consider the following 477-residue polypeptide: Calcium uptake protein 1, mitochondrial (477 aa).

Residues 1 to 33 (MFRLNTLSALAELAVGSRWYHGASQPTQTKRRL) constitute a mitochondrion transit peptide. Residues 57-107 (AESPPCVNSKKPDTEDKERNKDSGEVSSREGRAADAAAEPYPEDKKKKRSG) form a disordered region. Basic and acidic residues predominate over residues 66 to 89 (KKPDTEDKERNKDSGEVSSREGRA). Residues 101-112 (KKKKRSGFRDRK) are polybasic region. Residue Ser124 is modified to Phosphoserine; by PKB. A k/R-ring region spans residues 128–131 (KIFR). The EF-hand 1 domain occupies 220-255 (TPQRNFEIAFKMFDLNGDGEVDMEEFEQVQSIIRSQ). Asp233, Asn235, Asp237, Glu239, and Glu244 together coordinate Ca(2+). A k/R-ring region spans residues 261–265 (RHRDR). The 21-residue stretch at 356–376 (KDGKGLTFQEVENFFTFLKNI) folds into the EF-hand 2; degenerate domain. The EF-hand 3 domain occupies 410–445 (LSDHVCDVVFALFDCDGNGELSNKEFVSIMKQRLMR). Residues Asp423, Asp425, Asn427, Glu429, and Glu434 each coordinate Ca(2+). Arg457 bears the Asymmetric dimethylarginine mark. The segment at 457 to 467 (RLMQAMWKCAQ) is C-helix region.

The protein belongs to the MICU1 family. MICU1 subfamily. In terms of assembly, heterodimer; disulfide-linked; heterodimerizes with MICU2 or MICU3. Homodimer; disulfide-linked. Component of the uniplex complex, composed of MCU, EMRE/SMDT1, MICU1 and MICU2 (or MICU3) in a 4:4:1:1 stoichiometry. The composition of calcium sensors within the uniplex complex can differ depending on tissues: a MICU1 homodimer can be present instead of the MICU1-MICU2 heterodimer in skeletal-muscle and kidney. MICU1 is recruited to the uniplex complex by EMRE/SMDT1, and it associates with MCU at low calcium levels, occluding the pore of the MCU channel. Associates with the MICOS complex. Interacts with SLC25A23. Interacts with CHCHD4/MIA40; which introduces the interchain disulfide bond with MICU2. Interacts (when methylated) with UCP2; leading to decrease the calcium sensitivity of MICU1. As to quaternary structure, heterodimer; disulfide-linked; heterodimerizes with MICU2 or MICU3. Heterodimerizes with MICU3 in skeletal muscle. Component of the uniplex complex, composed of MCU, EMRE/SMDT1, MICU1 and MICU2 (or MICU3) in a 4:4:1:1 stoichiometry. Also localizes to mitochondrial cristae junctions. Post-translationally, phosphorylation at Ser-124 by AKT1 impairs its maturation and stability. In terms of processing, asymmetric dimethylation at Arg-457 by PRMT1 decreases the calcium sensitivity of MICU1 by promoting interaction with UCP2. Degraded by YME1L1 when not complexed as homodimer or heterodimer. Not degraded when complexed as homodimer or heterodimer; the presence of the interchain disulfide bond protecting MICU1 from degradation by YME1L1. As to expression, expressed in skeletal muscle, heart, kidney, liver, brain, lung, fat and spleen. Specifically expressed in the skeletal muscle.

Its subcellular location is the mitochondrion intermembrane space. It localises to the mitochondrion inner membrane. In terms of biological role, calcium sensor of the mitochondrial calcium uniporter (MCU) channel, which senses calcium level via its EF-hand domains. MICU1 and MICU2 (or MICU3) form a disulfide-linked heterodimer that stimulates and inhibits MCU activity, depending on the concentration of calcium. At low calcium levels, MICU1 occludes the pore of the MCU channel, preventing mitochondrial calcium uptake. At higher calcium levels, calcium-binding to MICU1 and MICU2 (or MICU3) induces a conformational change that weakens MCU-MICU1 interactions and moves the MICU1-MICU2 heterodimer away from the pore, allowing calcium permeation through the MCU channel. Also required to protect against manganese toxicity by preventing manganese uptake by MCU: mechanistically, manganese-binding to its EF-hand domains does not induce any conformational change, maintaining MCU pore occlusion. Acts as a regulator of mitochondrial cristae structure independently of its ability to regulate the mitochondrial calcium uniporter channel. Regulates glucose-dependent insulin secretion in pancreatic beta-cells by regulating mitochondrial calcium uptake. Induces T-helper 1-mediated autoreactivity, which is accompanied by the release of IFNG. Its function is as follows. Isoform that regulates mitochondrial calcium uniporter (MCU) in the skeletal muscle. Compared to other isoforms, this isoform has higher affinity for calcium, promoting mitochondrial calcium uptake at lower calcium concentrations. This allows a rapid response of mitochondrial metabolism and ensures sustained ATP production needed for resistance and strenuous exercise. This is Calcium uptake protein 1, mitochondrial from Mus musculus (Mouse).